Reading from the N-terminus, the 1251-residue chain is Cyclic nucleotide-gated channel beta-1 (1251 aa).

Disordered stretches follow at residues 1-75 (MLGW…QETK), 121-151 (ITED…EAQD), 172-252 (QPPK…TRDP), and 314-561 (EDAH…STNS). Residues 1 to 656 (MLGWVQRVLP…SIDPLTNLMY (656 aa)) are Cytoplasmic-facing. Residues 23–50 (EEEEVEPEPEMEAEVEPEPNPEEAETES) are compositionally biased toward acidic residues. Over residues 238-247 (GSQAQTSSLP) the composition is skewed to polar residues. The span at 335 to 352 (EENKAVEKMPRELSRIEE) shows a compositional bias: basic and acidic residues. Residues 353–373 (EKEDEEEEEEEEEEEEEEEVT) are compositionally biased toward acidic residues. A compositionally biased stretch (basic and acidic residues) spans 404-423 (KLWEEVGEEAKKEAEEKAKE). The span at 424 to 434 (EAEEVAEEEAE) shows a compositional bias: acidic residues. A compositionally biased stretch (basic and acidic residues) spans 435–446 (KEPQDWAETKEE). The tract at residues 557-567 (ASTNSAIINDR) is calmodulin-binding CaM1. The IQ-like signature appears at 568–578 (LQELVKLFKER). A disordered region spans residues 585 to 619 (KLIDPDVTSDEESPKPSPAKKAPEPAPDTKPAEAE). A helical membrane pass occupies residues 657 to 678 (VLWLFFVVMAWNWNCWLIPVRW). Topologically, residues 679–687 (AFPYQTPDN) are extracellular. A helical transmembrane segment spans residues 688–709 (IHHWLLMDYLCDLIYFLDITVF). The Cytoplasmic portion of the chain corresponds to 710-724 (QTRLQFVRGGDIITD). The helical transmembrane segment at 725 to 744 (KKDMRNNYLKSRRFKMDLLS) threads the bilayer. Residues 745 to 760 (LLPLDFLYLKVGVNPL) lie on the Extracellular side of the membrane. Residues 761–773 (LRLPRCLKYMAFF) traverse the membrane as a helical segment. At 774–785 (EFNSRLESILSK) the chain is on the cytoplasmic side. Residues 786–808 (AYVYRVIRTTAYLLYSLHLNSCL) traverse the membrane as a helical segment. Residues 786 to 885 (AYVYRVIRTT…IGQMRDVVGA (100 aa)) are ion conduction pathway. The Extracellular portion of the chain corresponds to 809–831 (YYWASAYQGLGSTHWVYDGVGNS). Transmembrane regions (helical) follow at residues 832–858 (YIRC…LFEI) and 859–884 (VFQL…DVVG). The Cytoplasmic segment spans residues 885-1251 (AATAGQTYYR…MPEEREEKAE (367 aa)). The interval 888–964 (AGQTYYRSCM…NIVSKVALFQ (77 aa)) is C-linker. The interval 968–1084 (RQMIFDMLKR…LLRKKARRML (117 aa)) is cyclic nucleotide-binding domain. Residues glycine 1029, glutamate 1030, serine 1032, arginine 1042, and threonine 1043 each coordinate 3',5'-cyclic GMP. 3',5'-cyclic AMP is bound at residue arginine 1042. The interval 1148–1154 (QQELVEQ) is calmodulin-binding CaM2. The interval 1151-1251 (LVEQAKSSQD…MPEEREEKAE (101 aa)) is disordered. The span at 1183–1203 (PPAPRTPPEPPGSPPSSPPPA) shows a compositional bias: pro residues. Residues 1242-1251 (MPEEREEKAE) show a composition bias toward basic and acidic residues.

It belongs to the cyclic nucleotide-gated cation channel (TC 1.A.1.5) family. CNGB1 subfamily. As to quaternary structure, the rod cyclic nucleotide-gated channel is a heterotetramer composed of CNGA1 and CNGB1 subunits with 3:1 stoichiometry. CNGA1:CNGB1 channel binds Ca(2+)-bound CALM1 via CaM1 and CaM2 regions of the CNGB1 subunit; this interaction modulates the affinity of the channel for cNMPs in response to intracellular Ca(2+) levels. The olfactory cyclic nucleotide-gated channel is a heterotetramer composed of CNGA2, CNGA4 and CNGB1 subunits with 2:1:1 stoichiometry.

The protein localises to the cell membrane. It localises to the cell projection. It is found in the cilium membrane. The catalysed reaction is Ca(2+)(in) = Ca(2+)(out). It carries out the reaction Na(+)(in) = Na(+)(out). The enzyme catalyses K(+)(in) = K(+)(out). It catalyses the reaction NH4(+)(in) = NH4(+)(out). The catalysed reaction is Rb(+)(in) = Rb(+)(out). It carries out the reaction Li(+)(in) = Li(+)(out). The enzyme catalyses Cs(+)(in) = Cs(+)(out). Its function is as follows. Pore-forming subunit of the rod cyclic nucleotide-gated channel. Mediates rod photoresponses at dim light converting transient changes in intracellular cGMP levels into electrical signals. In the dark, cGMP levels are high and keep the channel open enabling a steady inward current carried by Na(+) and Ca(2+) ions that leads to membrane depolarization and neurotransmitter release from synaptic terminals. Upon photon absorption cGMP levels decline leading to channel closure and membrane hyperpolarization that ultimately slows neurotransmitter release and signals the presence of light, the end point of the phototransduction cascade. Pore-forming subunit of the olfactory cyclic nucleotide-gated channel. Operates in the cilia of olfactory sensory neurons where chemical stimulation of the odorant is converted to an electrical signal. Mediates odorant-induced cAMP-dependent Ca(2+) influx triggering neuron depolarization. The rise of intracellular Ca(2+) levels potentiates the olfactory response by activating Ca(2+)-dependent Cl(-) channels, but it also serves as a negative feedback signal to desensitize the channel for rapid adaptation to odorants. Conducts cGMP- and cAMP-gated ion currents, with permeability for monovalent and divalent cations. The selectivity for Ca(2+) over Na(+) increases with cGMP concentrations, whereas the selectivity among monovalent ions is independent of the cGMP levels. Functionally, high affinity rod photoreceptor phosphodiesterase (PDE6)-binding protein that modulates its catalytic properties: it is a regulator of spontaneous activation of rod PDE6, thereby serving to lower rod photoreceptor 'dark noise' and allowing these sensory cells to operate at the single photon detection limit. This Homo sapiens (Human) protein is Cyclic nucleotide-gated channel beta-1.